A 391-amino-acid polypeptide reads, in one-letter code: Histidinol-phosphate aminotransferase (391 aa).

The residue at position 245 (Lys-245) is an N6-(pyridoxal phosphate)lysine.

The protein belongs to the class-II pyridoxal-phosphate-dependent aminotransferase family. Histidinol-phosphate aminotransferase subfamily. As to quaternary structure, homodimer. Pyridoxal 5'-phosphate serves as cofactor.

The enzyme catalyses L-histidinol phosphate + 2-oxoglutarate = 3-(imidazol-4-yl)-2-oxopropyl phosphate + L-glutamate. It participates in amino-acid biosynthesis; L-histidine biosynthesis; L-histidine from 5-phospho-alpha-D-ribose 1-diphosphate: step 7/9. The chain is Histidinol-phosphate aminotransferase from Bifidobacterium adolescentis (strain ATCC 15703 / DSM 20083 / NCTC 11814 / E194a).